The primary structure comprises 269 residues: Undecaprenyl-diphosphatase (269 aa).

7 consecutive transmembrane segments (helical) span residues 42–62 (WDTFIVLIQLGAVLGVVALYF), 83–103 (LTVLIGCIPAFAAGLALHGVI), 110–130 (PYLPQVICVSLILGGVILLVV), 142–162 (GMALSLKTAALIGLFQCLSLL), 186–206 (AEFSFFMAIPIMVGAFALDLL), 219–239 (AIAIGFVVSFLSGLVVVKFLI), and 247–267 (FTPFAWWRIVVGVIGLGLIYI).

This sequence belongs to the UppP family.

It localises to the cell inner membrane. The catalysed reaction is di-trans,octa-cis-undecaprenyl diphosphate + H2O = di-trans,octa-cis-undecaprenyl phosphate + phosphate + H(+). Its function is as follows. Catalyzes the dephosphorylation of undecaprenyl diphosphate (UPP). Confers resistance to bacitracin. This is Undecaprenyl-diphosphatase from Caulobacter sp. (strain K31).